Here is a 74-residue protein sequence, read N- to C-terminus: MIQAAKIIGTGLATTGLIGAGVGIGVVFGALILGVARNPSLRGLLFSYAILGFAFSEATGLFALMMAFLLLYVA.

2 helical membrane passes run glycine 16 to alanine 36 and isoleucine 50 to leucine 70.

The protein belongs to the ATPase C chain family. In terms of assembly, F-type ATPases have 2 components, CF(1) - the catalytic core - and CF(0) - the membrane proton channel. CF(1) has five subunits: alpha(3), beta(3), gamma(1), delta(1), epsilon(1). CF(0) has three main subunits: a, b and c.

The protein localises to the mitochondrion membrane. Its function is as follows. Mitochondrial membrane ATP synthase (F(1)F(0) ATP synthase or Complex V) produces ATP from ADP in the presence of a proton gradient across the membrane which is generated by electron transport complexes of the respiratory chain. F-type ATPases consist of two structural domains, F(1) - containing the extramembraneous catalytic core and F(0) - containing the membrane proton channel, linked together by a central stalk and a peripheral stalk. During catalysis, ATP synthesis in the catalytic domain of F(1) is coupled via a rotary mechanism of the central stalk subunits to proton translocation. Part of the complex F(0) domain. A homomeric c-ring of probably 10 subunits is part of the complex rotary element. This Trichophyton rubrum (Athlete's foot fungus) protein is ATP synthase subunit 9, mitochondrial (ATP9).